Consider the following 152-residue polypeptide: Acidic phospholipase A2 homolog taipoxin gamma chain (152 aa).

A signal peptide spans 1-19; sequence MHPAHLLVLLAVCVSLLGS. Disulfide bonds link cysteine 38–cysteine 104, cysteine 42–cysteine 46, cysteine 54–cysteine 151, cysteine 56–cysteine 72, cysteine 71–cysteine 132, cysteine 78–cysteine 125, cysteine 88–cysteine 118, and cysteine 111–cysteine 123. N-linked (GlcNAc...) asparagine glycosylation occurs at asparagine 97.

The protein belongs to the phospholipase A2 family. Group I subfamily. D49 sub-subfamily. Heterotrimer of alpha, beta, and gamma chains; non-covalently linked. Contains 0.9% fucose, 2.2% mannose, 4.2% N-acetyl-D-glucosamine, 3.5% galactose, and 3.8% N-acetyl-neuraminic acid (sialic acid). As to expression, expressed by the venom gland.

Its subcellular location is the secreted. In terms of biological role, heterotrimer: Snake venom phospholipase A2 (PLA2) heterotrimer that acts as a potent presynaptic neurotoxin by blocking synaptic transmission and synaptic vesicle recycling. May act by binding in a calcium-dependent fashion to neurotonal pentraxin-1 (NPTX1) and neurotonal pentraxin-2 (NPTX2), but not to neuronal pentraxin receptor (NPTXR). Also binds to taipoxin-associated calcium binding protein 49 (RCN2), a protein localized in the lumen of endoplasmic reticulum. Functionally, monomer (gamma chain): Snake venom phospholipase A2 homolog that is neither toxic nor enzymatically active. Does not bind calcium. This is Acidic phospholipase A2 homolog taipoxin gamma chain from Oxyuranus scutellatus scutellatus (Australian taipan).